A 418-amino-acid polypeptide reads, in one-letter code: Putative competence-damage inducible protein (418 aa).

Belongs to the CinA family.

The sequence is that of Putative competence-damage inducible protein from Streptococcus pneumoniae (strain 70585).